The following is a 194-amino-acid chain: MSEIKLIVGLGNPGEKYADTRHNAGEWLIERLARRFNVSLNPESKFFGKTVRTLVNGKEVRLLVPTTFMNLSGKAVGALASFYRIKPEEILVIHDELDLPAGTAKLKQGGGHGGHNGLKDIVAQLGNNNNFYRLRIGIGHPGHRDLVAGYVLNKPSPADRNALEKVLDEATDCVEMIFKDGMIKATNRLNSFKI.

Tyrosine 17 lines the tRNA pocket. Histidine 22 functions as the Proton acceptor in the catalytic mechanism. Residues phenylalanine 68, asparagine 70, and asparagine 116 each coordinate tRNA.

It belongs to the PTH family. Monomer.

It localises to the cytoplasm. It carries out the reaction an N-acyl-L-alpha-aminoacyl-tRNA + H2O = an N-acyl-L-amino acid + a tRNA + H(+). In terms of biological role, hydrolyzes ribosome-free peptidyl-tRNAs (with 1 or more amino acids incorporated), which drop off the ribosome during protein synthesis, or as a result of ribosome stalling. Functionally, catalyzes the release of premature peptidyl moieties from peptidyl-tRNA molecules trapped in stalled 50S ribosomal subunits, and thus maintains levels of free tRNAs and 50S ribosomes. The sequence is that of Peptidyl-tRNA hydrolase from Haemophilus influenzae (strain PittGG).